The primary structure comprises 109 residues: Nucleoid-associated protein SG0690 (109 aa).

A disordered region spans residues 1-23 (MFGKGGMGNLMKQAQQMQEKMQR).

This sequence belongs to the YbaB/EbfC family. As to quaternary structure, homodimer.

It is found in the cytoplasm. The protein localises to the nucleoid. Binds to DNA and alters its conformation. May be involved in regulation of gene expression, nucleoid organization and DNA protection. This Sodalis glossinidius (strain morsitans) protein is Nucleoid-associated protein SG0690.